We begin with the raw amino-acid sequence, 426 residues long: Serine--tRNA ligase (426 aa).

Threonine 233–glutamate 235 contacts L-serine. An ATP-binding site is contributed by arginine 264–glutamate 266. Glutamate 287 provides a ligand contact to L-serine. ATP is bound at residue glutamate 351–serine 354. Residue serine 387 coordinates L-serine.

The protein belongs to the class-II aminoacyl-tRNA synthetase family. Type-1 seryl-tRNA synthetase subfamily. In terms of assembly, homodimer. The tRNA molecule binds across the dimer.

It localises to the cytoplasm. It catalyses the reaction tRNA(Ser) + L-serine + ATP = L-seryl-tRNA(Ser) + AMP + diphosphate + H(+). The catalysed reaction is tRNA(Sec) + L-serine + ATP = L-seryl-tRNA(Sec) + AMP + diphosphate + H(+). It functions in the pathway aminoacyl-tRNA biosynthesis; selenocysteinyl-tRNA(Sec) biosynthesis; L-seryl-tRNA(Sec) from L-serine and tRNA(Sec): step 1/1. Functionally, catalyzes the attachment of serine to tRNA(Ser). Is also able to aminoacylate tRNA(Sec) with serine, to form the misacylated tRNA L-seryl-tRNA(Sec), which will be further converted into selenocysteinyl-tRNA(Sec). This is Serine--tRNA ligase from Stenotrophomonas maltophilia (strain K279a).